We begin with the raw amino-acid sequence, 320 residues long: Homoserine kinase (320 aa).

100 to 110 (PLSSGMGSSAA) is an ATP binding site.

It belongs to the GHMP kinase family. Homoserine kinase subfamily.

It is found in the cytoplasm. It carries out the reaction L-homoserine + ATP = O-phospho-L-homoserine + ADP + H(+). The protein operates within amino-acid biosynthesis; L-threonine biosynthesis; L-threonine from L-aspartate: step 4/5. Catalyzes the ATP-dependent phosphorylation of L-homoserine to L-homoserine phosphate. The protein is Homoserine kinase of Chlorobium phaeobacteroides (strain DSM 266 / SMG 266 / 2430).